A 353-amino-acid chain; its full sequence is Variable large protein 12 (353 aa).

The signal sequence occupies residues 1 to 18 (MRKRISAIIMTLFMVLAS). Cysteine 19 is lipidated: N-palmitoyl cysteine. The S-diacylglycerol cysteine moiety is linked to residue cysteine 19.

This sequence belongs to the variable large protein (Vlp) family. Beta subfamily.

It is found in the cell outer membrane. The Vlp and Vsp proteins are antigenically distinct proteins, only one vlp or vsp gene is transcriptionally active at any one time. Switching between these genes is a mechanism of host immune response evasion. This Borrelia hermsii protein is Variable large protein 12.